A 401-amino-acid chain; its full sequence is MDIVNDLVSSISSISSEAAEEEAIRDELRNDKGGLIAGIFVLTLTASFVPWFLTKAKITNLVSVVSILTCLSAGVIIGAGFNHILPDAAEEFQSYVEAVAPDNKYGDFPFAHTITIVTMFALICVDKILVSGGLDGEADHNHMDLSQHNHPSPHAAGEIDLNIYTNGDDDDDDVNEDQEEDSTKDDEKEHGHGHGHGHGHNSSNSSSNGHGHGLKKKKKSKKEHGHGHNHDHSSNGHSHKDEKDSEKVNVSSKSKAWVFLVALSLHSIFDGLGLGSETQKDSFYGLLIAVLAHKFLDGLVLGIAIKYAYFSFKFSCIALVFAAAMTPLGIGIGMAISSAYESSTDAYLVKGIILSITCGSFIYISLIELLPSGLCQKGWPKLKLAVAFLGYSVMAILALWV.

3 helical membrane passes run 33 to 53, 61 to 81, and 114 to 134; these read GGLI…PWFL, LVSV…GAGF, and ITIV…SGGL. A disordered region spans residues 141–247; it reads NHMDLSQHNH…SHKDEKDSEK (107 aa). Over residues 167 to 184 the composition is skewed to acidic residues; the sequence is GDDDDDDVNEDQEEDSTK. The segment covering 200 to 209 has biased composition (low complexity); sequence HNSSNSSSNG. Residues 212 to 225 show a composition bias toward basic residues; it reads HGLKKKKKSKKEHG. The segment covering 226-247 has biased composition (basic and acidic residues); that stretch reads HGHNHDHSSNGHSHKDEKDSEK. The next 5 helical transmembrane spans lie at 256–276, 285–305, 316–336, 351–371, and 381–401; these read AWVF…GLGS, GLLI…GIAI, CIAL…GMAI, GIIL…ELLP, and KLKL…ALWV.

The protein belongs to the ZIP transporter (TC 2.A.5) family.

Its subcellular location is the membrane. In terms of biological role, may transport divalent cations. May participate, with dstA, in the regulation of the differentiation of stalk cells during development. This is Protein zntC (zntC) from Dictyostelium discoideum (Social amoeba).